The chain runs to 392 residues: Fasciculation and elongation protein zeta-1 (392 aa).

The tract at residues 1–37 (MEAPLVSLDEEFEDLRPSCSEDPEEKPQCFYGSSPHH) is disordered. Residue Ser-58 is modified to Phosphoserine. The tract at residues 175-198 (MQNSPDPEEEEEVLEEEDGGETSS) is disordered. The span at 180–194 (DPEEEEEVLEEEDGG) shows a compositional bias: acidic residues. Residues 230–298 (SELTELLDQV…KKRRKEKGLS (69 aa)) adopt a coiled-coil conformation. Ser-298 and Ser-316 each carry phosphoserine.

The protein belongs to the zygin family. In terms of assembly, homodimer; disulfide-linked. May form heterodimers with FEZ2. Interacts with the NH2-terminal variable region (V1) of PKC zeta and weakly with that of PKC epsilon. Interacts with UBE4B. Interacts with SAP30L. Interacts with SCOC and ULK1; SCOC interferes with ULK1-binding to FEZ1. Directly interacts with SCOC and UVRAG. Stabilizes the interaction between SCOC and UVRAG during amino acid starvation. In terms of processing, phosphorylated by protein kinase C zeta; which enhances interaction with UBE4B and polyubiquitination. Post-translationally, polyubiquitinated in a UBE4B-dependent manner; which does not lead to proteasomal degradation and may be important for neurogenic activity. Polyubiquitin linkage seems to be mainly through Lys-26. In terms of tissue distribution, mainly expressed in brain.

It is found in the cytoplasm. The protein resides in the cytoskeleton. Its subcellular location is the microtubule organizing center. It localises to the centrosome. The protein localises to the cell membrane. Its function is as follows. May be involved in axonal outgrowth as component of the network of molecules that regulate cellular morphology and axon guidance machinery. Able to restore partial locomotion and axonal fasciculation to C.elegans unc-76 mutants in germline transformation experiments. May participate in the transport of mitochondria and other cargos along microtubules. The protein is Fasciculation and elongation protein zeta-1 (FEZ1) of Homo sapiens (Human).